A 341-amino-acid polypeptide reads, in one-letter code: DNA-directed RNA polymerase subunit alpha (341 aa).

Positions 1 to 233 are alpha N-terminal domain (alpha-NTD); it reads MLKDGTSVSN…DLLSPFLHTK (233 aa). The segment at 262 to 341 is alpha C-terminal domain (alpha-CTD); it reads SEGDFFKNTF…NEKPRVVGDE (80 aa).

The protein belongs to the RNA polymerase alpha chain family. In plastids the minimal PEP RNA polymerase catalytic core is composed of four subunits: alpha, beta, beta', and beta''. When a (nuclear-encoded) sigma factor is associated with the core the holoenzyme is formed, which can initiate transcription.

The protein localises to the plastid. The protein resides in the chloroplast. It catalyses the reaction RNA(n) + a ribonucleoside 5'-triphosphate = RNA(n+1) + diphosphate. Its function is as follows. DNA-dependent RNA polymerase catalyzes the transcription of DNA into RNA using the four ribonucleoside triphosphates as substrates. The sequence is that of DNA-directed RNA polymerase subunit alpha from Marsilea quadrifolia (European water clover).